A 246-amino-acid chain; its full sequence is RNA polymerase sigma-B factor (246 aa).

A Polymerase core binding motif is present at residues 25 to 38; sequence DLIQEGNIGLMKAV. The H-T-H motif DNA-binding region spans 201-220; sequence LKELGEHFGFSRERARQLEI.

This sequence belongs to the sigma-70 factor family.

In terms of biological role, sigma factors are initiation factors that promote the attachment of RNA polymerase to specific initiation sites and are then released. This sigma factor is essential for late-stage differentiation of M.xanthus. The polypeptide is RNA polymerase sigma-B factor (sigB) (Myxococcus xanthus).